The following is a 429-amino-acid chain: GDP-fucose protein O-fucosyltransferase 2 (429 aa).

The signal sequence occupies residues M1–A21. P53–N57 lines the GDP-beta-L-fucose pocket. The active-site Proton acceptor is the E54. The cysteines at positions 161 and 192 are disulfide-linked. N-linked (GlcNAc...) asparagine glycans are attached at residues N189, N209, and N259. Residues H292 to R294, D371, and T388 to F389 contribute to the GDP-beta-L-fucose site. C412 and C419 are oxidised to a cystine.

This sequence belongs to the glycosyltransferase 68 family.

It is found in the endoplasmic reticulum. The protein localises to the golgi apparatus. The catalysed reaction is L-seryl-[protein] + GDP-beta-L-fucose = 3-O-(alpha-L-fucosyl)-L-seryl-[protein] + GDP + H(+). It catalyses the reaction L-threonyl-[protein] + GDP-beta-L-fucose = 3-O-(alpha-L-fucosyl)-L-threonyl-[protein] + GDP + H(+). Its pathway is protein modification; protein glycosylation. Catalyzes the reaction that attaches fucose through an O-glycosidic linkage to a conserved serine or threonine residue in the consensus sequence C1-X-X-S/T-C2 of thrombospondin type I repeats (TSRs) where C1 and C2 are the first and second cysteines of the repeat, respectively. O-fucosylates members of several protein families including the ADAMTS, the thrombospondin (TSP) and spondin families. Required for the proper secretion of ADAMTS family members such as ADAMTSL1 and ADAMTS13. The O-fucosylation of TSRs is also required for restricting epithelial to mesenchymal transition (EMT), maintaining the correct patterning of mesoderm and localization of the definite endoderm. This Pan troglodytes (Chimpanzee) protein is GDP-fucose protein O-fucosyltransferase 2 (POFUT2).